A 572-amino-acid chain; its full sequence is Cytosolic Fe-S cluster assembly factor NAR1 (572 aa).

[4Fe-4S] cluster is bound by residues cysteine 20, cysteine 62, cysteine 65, cysteine 68, cysteine 205, and cysteine 260. The segment at 416-436 is disordered; sequence ARPSRMPGGKPIGSARRPNGK. [4Fe-4S] cluster-binding residues include cysteine 450 and cysteine 454.

Belongs to the NARF family.

In terms of biological role, component of the cytosolic Fe/S protein assembly machinery. Required for maturation of extramitochondrial Fe/S proteins. May play a role in the transfer of pre-assembled Fe/S clusters to target apoproteins. The chain is Cytosolic Fe-S cluster assembly factor NAR1 (NAR1) from Botryotinia fuckeliana (strain B05.10) (Noble rot fungus).